Here is a 260-residue protein sequence, read N- to C-terminus: Snake venom serine protease homolog (260 aa).

The N-terminal stretch at 1–18 is a signal peptide; it reads MVLVRVLANLLMLQLSYA. Residues 19–24 constitute a propeptide that is removed on maturation; the sequence is QKSSEL. A Peptidase S1 domain is found at 25 to 251; sequence IIGGDECNIN…HLNWIQSIIA (227 aa). Intrachain disulfides connect Cys-31/Cys-165, Cys-52/Cys-68, Cys-100/Cys-258, Cys-144/Cys-212, Cys-176/Cys-191, and Cys-202/Cys-227. Residues Asn-123 and Asn-124 are each glycosylated (N-linked (GlcNAc...) asparagine). A glycan (N-linked (GlcNAc...) asparagine) is linked at Asn-253.

It belongs to the peptidase S1 family. Snake venom subfamily. Expressed by the venom gland.

It localises to the secreted. Its function is as follows. Snake venom serine protease homolog that may act in the hemostasis system of the prey. In Protobothrops jerdonii (Jerdon's pitviper), this protein is Snake venom serine protease homolog.